The chain runs to 388 residues: Nitric oxide reductase FlRd-NAD(+) reductase (388 aa).

It belongs to the FAD-dependent oxidoreductase family. Requires FAD as cofactor.

Its subcellular location is the cytoplasm. It catalyses the reaction 2 reduced [nitric oxide reductase rubredoxin domain] + NAD(+) + H(+) = 2 oxidized [nitric oxide reductase rubredoxin domain] + NADH. It participates in nitrogen metabolism; nitric oxide reduction. Functionally, one of at least two accessory proteins for anaerobic nitric oxide (NO) reductase. Reduces the rubredoxin moiety of NO reductase. The chain is Nitric oxide reductase FlRd-NAD(+) reductase from Aeromonas hydrophila subsp. hydrophila (strain ATCC 7966 / DSM 30187 / BCRC 13018 / CCUG 14551 / JCM 1027 / KCTC 2358 / NCIMB 9240 / NCTC 8049).